A 383-amino-acid chain; its full sequence is MTSQFSTAGLTLELLRYPSQQVSNLQAWDAADEHIIKVLAEKVLEENAVPPQPCAIINDSFGALSCALTRMDSSWPLTVISDAKTSQLGALENLTRNQLDAEGIKWLTSRAPLPQDLSLVLMKLPKNLAYFAQQLRGLSQVLPQGTQVLIGAKAKSINSALITLLAEHLGPASASLAWKNTRVITCVSDGRARSLPKAITWSVPEYQLEISNLSNVFAANKLDIGARIMLENMPNGEFNTVVDLGCGNGILGLRAAGLYPKAKIHFIDDSEMAVASSQANWALNTLAPERAEFHWDDCMSHLDETVQPDLVLCNPPFHQGEAITDHIAWQMFNDAKHRLRSGGILHIVGNRHLNYHVKLKRLFGNCTTVASNGKFVILQSVKG.

Belongs to the methyltransferase superfamily. RlmG family.

Its subcellular location is the cytoplasm. The enzyme catalyses guanosine(1835) in 23S rRNA + S-adenosyl-L-methionine = N(2)-methylguanosine(1835) in 23S rRNA + S-adenosyl-L-homocysteine + H(+). Its function is as follows. Specifically methylates the guanine in position 1835 (m2G1835) of 23S rRNA. The polypeptide is Ribosomal RNA large subunit methyltransferase G (Shewanella denitrificans (strain OS217 / ATCC BAA-1090 / DSM 15013)).